Consider the following 347-residue polypeptide: GMP reductase (347 aa).

Position 108-131 (108-131 (ADFEKTVQILALNPALNFVCIDVA)) interacts with NADP(+). Residues Gly-181 and Gly-183 each contribute to the K(+) site. Residue Cys-186 is the Thioimidate intermediate of the active site. 216–239 (IVSDGGCTMPGDVAKAFGGGADFV) contributes to the NADP(+) binding site.

This sequence belongs to the IMPDH/GMPR family. GuaC type 1 subfamily. Homotetramer.

It catalyses the reaction IMP + NH4(+) + NADP(+) = GMP + NADPH + 2 H(+). Functionally, catalyzes the irreversible NADPH-dependent deamination of GMP to IMP. It functions in the conversion of nucleobase, nucleoside and nucleotide derivatives of G to A nucleotides, and in maintaining the intracellular balance of A and G nucleotides. This chain is GMP reductase, found in Salmonella paratyphi A (strain ATCC 9150 / SARB42).